A 435-amino-acid chain; its full sequence is tRNA-2-methylthio-N(6)-dimethylallyladenosine synthase (435 aa).

The region spanning 1–117 (MKYFIKTYGC…MPKLLEDVKV (117 aa)) is the MTTase N-terminal domain. [4Fe-4S] cluster-binding residues include C10, C46, C80, C156, C160, and C163. Residues 142–370 (RDNSYCAYVT…LEIQKAITSK (229 aa)) form the Radical SAM core domain. The 61-residue stretch at 373–433 (QRYKNTVQKV…FQSLDGVVQN (61 aa)) folds into the TRAM domain.

Belongs to the methylthiotransferase family. MiaB subfamily. Monomer. [4Fe-4S] cluster serves as cofactor.

It localises to the cytoplasm. It carries out the reaction N(6)-dimethylallyladenosine(37) in tRNA + (sulfur carrier)-SH + AH2 + 2 S-adenosyl-L-methionine = 2-methylsulfanyl-N(6)-dimethylallyladenosine(37) in tRNA + (sulfur carrier)-H + 5'-deoxyadenosine + L-methionine + A + S-adenosyl-L-homocysteine + 2 H(+). Catalyzes the methylthiolation of N6-(dimethylallyl)adenosine (i(6)A), leading to the formation of 2-methylthio-N6-(dimethylallyl)adenosine (ms(2)i(6)A) at position 37 in tRNAs that read codons beginning with uridine. This Hydrogenobaculum sp. (strain Y04AAS1) protein is tRNA-2-methylthio-N(6)-dimethylallyladenosine synthase.